The following is a 262-amino-acid chain: Polyamine aminopropyltransferase (262 aa).

A PABS domain is found at 1 to 249 (MWITQEITPY…DIHRAAFALP (249 aa)). N29 is a binding site for S-methyl-5'-thioadenosine. D83 contributes to the spermidine binding site. The active-site Proton acceptor is D155.

Homodimer.

The protein localises to the cytoplasm. It catalyses the reaction S-adenosyl 3-(methylsulfanyl)propylamine + putrescine = S-methyl-5'-thioadenosine + spermidine + H(+). It functions in the pathway amine and polyamine biosynthesis; spermidine biosynthesis; spermidine from putrescine: step 1/1. Its activity is regulated as follows. Inhibited by methylglyoxal bis(cyclopentylamidinohydrazone)(MGBCP). In terms of biological role, involved in the cell growth and proliferation. Catalyzes the irreversible transfer of a propylamine group from the amino donor S-adenosylmethioninamine (decarboxy-AdoMet) to putrescine (1,4-diaminobutane) to yield spermidine. Spermidine cannot be used as an aminopropyl acceptor. In Helicobacter pylori (strain ATCC 700392 / 26695) (Campylobacter pylori), this protein is Polyamine aminopropyltransferase.